A 226-amino-acid polypeptide reads, in one-letter code: Low-molecular weight cobalt-containing nitrile hydratase subunit beta (226 aa).

Residues 1–22 (MDGIHDLGGRAGLGPIKPESDE) form a disordered region.

It belongs to the nitrile hydratase subunit beta family. In terms of assembly, heterodimer of an alpha and a beta chain.

The catalysed reaction is an aliphatic primary amide = an aliphatic nitrile + H2O. In terms of biological role, NHase catalyzes the hydration of various nitrile compounds to the corresponding amides. The sequence is that of Low-molecular weight cobalt-containing nitrile hydratase subunit beta from Rhodococcus rhodochrous.